We begin with the raw amino-acid sequence, 167 residues long: Lipoprotein signal peptidase (167 aa).

4 consecutive transmembrane segments (helical) span residues 8–28 (TFLT…VVLL), 46–66 (WGHF…FGLF), 68–88 (QYKI…ALFL), and 101–121 (IALT…LLHG). Residues Asp125 and Asp143 contribute to the active site. A helical transmembrane segment spans residues 139–159 (FNLADAFISIGTLLLIGHLYF).

The protein belongs to the peptidase A8 family.

It localises to the cell inner membrane. It catalyses the reaction Release of signal peptides from bacterial membrane prolipoproteins. Hydrolyzes -Xaa-Yaa-Zaa-|-(S,diacylglyceryl)Cys-, in which Xaa is hydrophobic (preferably Leu), and Yaa (Ala or Ser) and Zaa (Gly or Ala) have small, neutral side chains.. It participates in protein modification; lipoprotein biosynthesis (signal peptide cleavage). This protein specifically catalyzes the removal of signal peptides from prolipoproteins. This is Lipoprotein signal peptidase from Chlamydia trachomatis serovar L2 (strain ATCC VR-902B / DSM 19102 / 434/Bu).